The sequence spans 357 residues: Transcription factor unc-86 (357 aa).

The POU-IV box signature appears at 35 to 44 (RAAQVALADI). A POU-specific domain is found at 155–232 (DMDTDPRQLE…ILHSWLEKAE (78 aa)). Positions 253 to 312 (KKRKRTSIAAPEKRELEQFFKQQPRPSGERIASIADRLDLKKNVVRVWFCNQRQKQKRDF) form a DNA-binding region, homeobox.

It belongs to the POU transcription factor family. Class-4 subfamily. As to quaternary structure, interacts with mec-3; the heterooligomer binds to the promoters of mec-3, mec-4 and mec-7. Specific to neurons and neuroblasts. Expressed in CEM head neurons and in IL2, URA, URB, URX and URY neurons. Not expressed in olfactory sensory neurons but expressed in AIZ interneurons.

Its subcellular location is the nucleus. Its function is as follows. Transcription factor required for correct cell fate determination and differentiation in diverse neuronal cell lineages where it plays a role in specifying the fate of daughter cells during cell divisions. Involved in sensory neuron production and function. Binds both alone and with mec-3 to the mec-3 promoter to initiate and maintain mec-3 expression which is required for sensory neuron differentiation. In addition, binds both alone and with mec-3 to the promoters of mec-4 and mec-7 which act to regulate sensory neuron function. Involved in determining the identity of the serotonergic NSM neurons and the cholinergic IL2 sensory and URA motor neurons. Promotes expression of the cfi-1 transcription factor in the URA and IL2 neurons which in turn activates normal URA and IL2 gene expression. Required to determine the identity of BDU sensory neurons in concert with transcription factor unc-86, regulating expression of a number of genes, including transcription factors ceh-14 and ahr-1, neuropeptides flp-10, nlp-1 and nlp-15, and tyramine receptor-encoding ser-2. Regulates expression of a number of genes in NSM neurons including bas-1, cat-1, dop-3, mgl-3, nlp-13, scd-2 and ptps-1. In the IL2 neurons, required for expression of cho-1, gcy-19, klp-6, lag-2, unc-5 and unc-17. Promotes expression of pkd-2 in the male-specific CEM head neurons. Required for dauer-specific branching of IL2Q neurons and nictation behavior. Controls both the timing and direction of axon outgrowth in HSN neurons. Plays a role in serotonin production by regulating expression of the tryptophan hydrolase tph-1 which catalyzes serotonin synthesis, in the AIM, NSM, HSN and RIH neurons. Involved in regulation of lin-11 expression in the AIZ interneurons, the major interneurons of the olfactory pathway, and is required for odortaxis behavior. Involved in neurite pruning between AIM neurons during larval development by regulating the expression of transcription factor mbr-1. Required for correct localization of unc-40. The polypeptide is Transcription factor unc-86 (unc-86) (Caenorhabditis elegans).